A 1185-amino-acid chain; its full sequence is DNA-directed RNA polymerase subunit beta' (1185 aa).

Zn(2+)-binding residues include Cys-67, Cys-69, Cys-82, and Cys-85. Asp-457, Asp-459, and Asp-461 together coordinate Mg(2+). The Zn(2+) site is built by Cys-802, Cys-876, Cys-883, and Cys-886.

Belongs to the RNA polymerase beta' chain family. In terms of assembly, the RNAP catalytic core consists of 2 alpha, 1 beta, 1 beta' and 1 omega subunit. When a sigma factor is associated with the core the holoenzyme is formed, which can initiate transcription. Mg(2+) is required as a cofactor. It depends on Zn(2+) as a cofactor.

It carries out the reaction RNA(n) + a ribonucleoside 5'-triphosphate = RNA(n+1) + diphosphate. In terms of biological role, DNA-dependent RNA polymerase catalyzes the transcription of DNA into RNA using the four ribonucleoside triphosphates as substrates. The chain is DNA-directed RNA polymerase subunit beta' from Clostridium novyi (strain NT).